We begin with the raw amino-acid sequence, 206 residues long: tRNA(Phe) 7-((3-amino-3-carboxypropyl)-4-demethylwyosine(37)-N(4))-methyltransferase 2 (206 aa).

This sequence belongs to the TYW3 family.

It catalyses the reaction 4-demethyl-7-[(3S)-3-amino-3-carboxypropyl]wyosine(37) in tRNA(Phe) + S-adenosyl-L-methionine = 7-[(3S)-3-amino-3-carboxypropyl]wyosine(37) in tRNA(Phe) + S-adenosyl-L-homocysteine + H(+). S-adenosyl-L-methionine-dependent methyltransferase that acts as a component of the wyosine derivatives biosynthesis pathway. Probably methylates N-4 position of wybutosine-86 to produce wybutosine-72. The chain is tRNA(Phe) 7-((3-amino-3-carboxypropyl)-4-demethylwyosine(37)-N(4))-methyltransferase 2 from Pyrococcus horikoshii (strain ATCC 700860 / DSM 12428 / JCM 9974 / NBRC 100139 / OT-3).